A 743-amino-acid chain; its full sequence is Ribosome biogenesis protein BOP1 homolog (743 aa).

WD repeat units lie at residues 365–404, 575–615, 617–655, 659–701, and 712–743; these read GHTATVRSVSVSPNGQYLATGCDDHLVRVYEVQTGRLMKR, KFSE…RRFK, SGGVTTCLSIHPEGDNFLVGDTTSHTSWFDMDFSDKPYK, SHKG…DYNK, and KHQRSVYAVAWHPSLAWLFTSTEDGVVTAWTE.

This sequence belongs to the WD repeat BOP1/ERB1 family.

The protein localises to the nucleus. The protein resides in the nucleolus. Its subcellular location is the nucleoplasm. In terms of biological role, required for maturation of ribosomal RNAs and formation of the large ribosomal subunit. The chain is Ribosome biogenesis protein BOP1 homolog from Leishmania braziliensis.